Reading from the N-terminus, the 394-residue chain is MSGEDEQQEQTIAEDLVVTKYKMGGDIANRVLRSLVEASSSGVSVLSLCEKGDAMIMEETGKIFKKEKEMKKGIAFPTSISVNNCVCHFSPLKSDQDYILKEGDLVKIDLGVHVDGFIANVAHTFVIGVAQGTQVTGRKADVIKAAHLCAEAALRLVKPGNQNTQVTEAWNKVAHSFNCTPIEGMLSHQLKQHVIDGEKTIIQNPTDQQKKDHEKAEFEVHEVYAVDVLVSSGEGKAKDAGQRTTIYKRDPSKQYGLKMKTSRAFFSEVERRFDAMPFTLRAFEDEKKARMGVVECAKHELLQPFNVLYEKEGEFVAQFKFTVLLMPNGPMRITSGPFEPDLYKSEMEVQDAELKALLQSSASRKTQKKKKKKASKTVENATSGETLEENGAGD.

An N-acetylserine modification is found at S2. A Phosphoserine modification is found at S2. The tract at residues 2 to 48 (SGEDEQQEQTIAEDLVVTKYKMGGDIANRVLRSLVEASSSGVSVLSL) is necessary for nucleolar localization. Residues 46-54 (LSLCEKGDA) form an RNA-binding region. K298 participates in a covalent cross-link: Glycyl lysine isopeptide (Lys-Gly) (interchain with G-Cter in SUMO2). The segment at 301-394 (LLQPFNVLYE…ETLEENGAGD (94 aa)) is necessary for nucleolar localization. At S335 the chain carries Phosphoserine. The interval 358–394 (LQSSASRKTQKKKKKKASKTVENATSGETLEENGAGD) is disordered. S361 carries the post-translational modification Phosphoserine; by PKC/PRKCD. Residues 361 to 375 (SASRKTQKKKKKKAS) form an interaction with RNA region. Positions 365–375 (KTQKKKKKKAS) are enriched in basic residues. Phosphothreonine is present on residues T366 and T386.

This sequence belongs to the peptidase M24 family. As to quaternary structure, isoform 2 interacts with the cytoplasmic domain of non-phosphorylated ERBB3; the interaction requires PKC activity. Interacts with AR. Treatment with HRG leads to dissociation from ERBB3 and increases association with AR. Interacts with nucleolin/NCL. Component of a ribonucleoprotein complex containing at least PA2G4, NCL, TOP1, PABPC2, RPLP0, acetylated histone H1 (HIST1H1A or H1F1), histone H1 2/4, RPL4, RPL8, RPL15, RPL18, RPL18A, RPL21, RPL11, RPL12, RPL28, RPL27, RPLP2 and RPL24. Interacts with HDAC2. Interacts with RB1; the interaction is enhanced upon PA2G4 dephosphorylation. Interacts with AKT1. Isoform 1 and isoform 2 interact with RNF20. Isoform 2 interacts with HUWE1. Interacts with DNAJC21. Phosphorylated on serine and threonine residues. Phosphorylation is enhanced by HRG treatment. Basal phosphorylation is PKC-dependent and HRG-induced phosphorylation is predominantly PKC-independent. Phosphorylation at Ser-361 by PKC/PRKCD regulates its nucleolar localization. In terms of processing, isoform 2 is polyubiquitinated, leading to proteasomal degradation and phosphorylation by PKC/PRKCD enhances polyubiquitination. As to expression, widely expressed.

Its subcellular location is the cytoplasm. The protein localises to the nucleus. It is found in the nucleolus. In terms of biological role, may play a role in a ERBB3-regulated signal transduction pathway. Seems be involved in growth regulation. Acts a corepressor of the androgen receptor (AR) and is regulated by the ERBB3 ligand neuregulin-1/heregulin (HRG). Inhibits transcription of some E2F1-regulated promoters, probably by recruiting histone acetylase (HAT) activity. Binds RNA. Associates with 28S, 18S and 5.8S mature rRNAs, several rRNA precursors and probably U3 small nucleolar RNA. May be involved in regulation of intermediate and late steps of rRNA processing. May be involved in ribosome assembly. Mediates cap-independent translation of specific viral IRESs (internal ribosomal entry site). Together with PTBP1 is required for the translation initiation on the foot-and-mouth disease virus (FMDV) IRES. Regulates cell proliferation, differentiation, and survival. Isoform 1 suppresses apoptosis whereas isoform 2 promotes cell differentiation. This Mus musculus (Mouse) protein is Proliferation-associated protein 2G4 (Pa2g4).